Consider the following 194-residue polypeptide: Adapter protein MecA 2 (194 aa).

This sequence belongs to the MecA family. Homodimer.

In terms of biological role, enables the recognition and targeting of unfolded and aggregated proteins to the ClpC protease or to other proteins involved in proteolysis. Also involved in Spx degradation by ClpC. Acts negatively in the development of competence by binding ComK and recruiting it to the ClpCP protease. When overexpressed, inhibits sporulation. In Bacillus subtilis (strain 168), this protein is Adapter protein MecA 2 (mecB).